Consider the following 153-residue polypeptide: Suppressor of RNA silencing (153 aa).

Positions 1–23 are C-1; that stretch reads MMATFSCVCCGTSTTSTYCGKRC. Residues 1–85 are interaction with TGB1; it reads MMATFSCVCC…IVSRFCGQKH (85 aa). The interval 19–47 is basic motif (BM); that stretch reads CGKRCERKHVYSETRNKRLELYKKYLLEP. Residues 60–85 are C-2; the sequence is CGMPCSIAEEACDQLPIVSRFCGQKH. Positions 86 to 127 are interaction with replication protein alpha-A; it reads ADLYDSLLKRSEQELLLEFLQKKMQELKLSHIVKMAKLESEV. Residues 92–132 are a coiled coil; sequence LLKRSEQELLLEFLQKKMQELKLSHIVKMAKLESEVNAIRK. Ser-96 is modified (phosphoserine).

Belongs to the virgaviridae suppressor of RNA silencing family. In terms of assembly, homooligomer. Interacts (via C-terminus) with replication protein alpha-A. Interacts (via N-terminus) with the movement protein TGB1; this interaction targets gammab-TGB1 at the periphery of chloroplasts and plasmodesmata. Interacts with host autophagy protein ATG7; this interaction disrupts the host ATG7-ATG8 interaction to promote viral infection. Interacts (via BM region) with host STY46; this interaction inhibits the viral infection. Phosphorylated at Ser-96 by a host PKA-like kinase; the phosphorylation at this site seems to suppress host cell death. In terms of processing, serine-phosphorylated by host STY46 kinase.

The protein resides in the host chloroplast envelope. It is found in the host endoplasmic reticulum. It localises to the host cell junction. The protein localises to the host plasmodesma. In terms of biological role, suppressor of RNA-mediated gene silencing, also known as post-transcriptional gene silencing (PTGS), a mechanism of plant viral defense that limits the accumulation of viral RNAs. Promotes viral cell-to-cell long distance movement by enhancing the ATPase activity of TGB1. Enhances RNA helicase activity of replication protein alpha-A. Suppresses autophagy induced by the host as a defense mechanism against viral infection. The protein is Suppressor of RNA silencing of Barley stripe mosaic virus (BSMV).